A 198-amino-acid polypeptide reads, in one-letter code: NADH-quinone oxidoreductase subunit B (198 aa).

Residues Cys-62, Cys-63, Cys-128, and Cys-158 each coordinate [4Fe-4S] cluster.

Belongs to the complex I 20 kDa subunit family. As to quaternary structure, NDH-1 is composed of 14 different subunits. Subunits NuoB, C, D, E, F, and G constitute the peripheral sector of the complex. The cofactor is [4Fe-4S] cluster.

It localises to the cell inner membrane. It catalyses the reaction a quinone + NADH + 5 H(+)(in) = a quinol + NAD(+) + 4 H(+)(out). In terms of biological role, NDH-1 shuttles electrons from NADH, via FMN and iron-sulfur (Fe-S) centers, to quinones in the respiratory chain. The immediate electron acceptor for the enzyme in this species is believed to be a menaquinone. Couples the redox reaction to proton translocation (for every two electrons transferred, four hydrogen ions are translocated across the cytoplasmic membrane), and thus conserves the redox energy in a proton gradient. In Phocaeicola vulgatus (strain ATCC 8482 / DSM 1447 / JCM 5826 / CCUG 4940 / NBRC 14291 / NCTC 11154) (Bacteroides vulgatus), this protein is NADH-quinone oxidoreductase subunit B.